The primary structure comprises 306 residues: Pantothenate kinase (306 aa).

91–98 (GSVAVGKS) contacts ATP.

It belongs to the prokaryotic pantothenate kinase family.

The protein localises to the cytoplasm. It catalyses the reaction (R)-pantothenate + ATP = (R)-4'-phosphopantothenate + ADP + H(+). It participates in cofactor biosynthesis; coenzyme A biosynthesis; CoA from (R)-pantothenate: step 1/5. In Streptococcus pyogenes serotype M3 (strain ATCC BAA-595 / MGAS315), this protein is Pantothenate kinase (coaA).